Consider the following 318-residue polypeptide: BES1/BZR1 homolog protein 2 (318 aa).

The segment covering 1 to 13 (MAAGGGGGGGGSS) has biased composition (gly residues). Disordered stretches follow at residues 1–34 (MAAG…RRRR), 84–133 (FKPP…PSPS), 166–195 (NSAP…PNGG), and 209–231 (APSS…CDES). A required for DNA-binding region spans residues 16–97 (RTPTWKEREN…ASDISGTPTN (82 aa)). The span at 91 to 101 (ISGTPTNFSTN) shows a compositional bias: polar residues. The segment covering 102-133 (SSIQPSPQSSAFPSPAPSYHGSPVSSSFPSPS) has biased composition (low complexity).

This sequence belongs to the BZR/LAT61 family. Phosphorylated. Phosphorylation increases protein degradation.

The polypeptide is BES1/BZR1 homolog protein 2 (BEH2) (Arabidopsis thaliana (Mouse-ear cress)).